Reading from the N-terminus, the 312-residue chain is HPr kinase/phosphorylase (312 aa).

Residues His-139 and Lys-160 contribute to the active site. 154–161 (GDSGIGKS) is an ATP binding site. Ser-161 is a binding site for Mg(2+). The Proton acceptor; for phosphorylation activity. Proton donor; for dephosphorylation activity role is filled by Asp-178. The tract at residues 202–211 (IEIRGVGIID) is important for the catalytic mechanism of both phosphorylation and dephosphorylation. Residue Glu-203 participates in Mg(2+) binding. Arg-244 is an active-site residue. The important for the catalytic mechanism of dephosphorylation stretch occupies residues 265 to 270 (PVKTGR).

The protein belongs to the HPrK/P family. In terms of assembly, homohexamer. Requires Mg(2+) as cofactor.

It carries out the reaction [HPr protein]-L-serine + ATP = [HPr protein]-O-phospho-L-serine + ADP + H(+). The catalysed reaction is [HPr protein]-O-phospho-L-serine + phosphate + H(+) = [HPr protein]-L-serine + diphosphate. Functionally, catalyzes the ATP- as well as the pyrophosphate-dependent phosphorylation of a specific serine residue in HPr, a phosphocarrier protein of the phosphoenolpyruvate-dependent sugar phosphotransferase system (PTS). HprK/P also catalyzes the pyrophosphate-producing, inorganic phosphate-dependent dephosphorylation (phosphorolysis) of seryl-phosphorylated HPr (P-Ser-HPr). The two antagonistic activities of HprK/P are regulated by several intracellular metabolites, which change their concentration in response to the absence or presence of rapidly metabolisable carbon sources (glucose, fructose, etc.) in the growth medium. Therefore, by controlling the phosphorylation state of HPr, HPrK/P is a sensor enzyme that plays a major role in the regulation of carbon metabolism and sugar transport: it mediates carbon catabolite repression (CCR), and regulates PTS-catalyzed carbohydrate uptake and inducer exclusion. The protein is HPr kinase/phosphorylase of Streptococcus pneumoniae (strain ATCC BAA-255 / R6).